We begin with the raw amino-acid sequence, 114 residues long: Probable divalent-cation tolerance protein cutA homolog (114 aa).

Belongs to the CutA family. Homotrimer.

This is Probable divalent-cation tolerance protein cutA homolog from Encephalitozoon cuniculi (strain GB-M1) (Microsporidian parasite).